The chain runs to 44 residues: Photosystem I reaction center subunit IX (44 aa).

A helical membrane pass occupies residues 7–27 (YLSTAPVLATLWFGSLAGLLI).

It belongs to the PsaJ family.

The protein resides in the plastid. Its subcellular location is the chloroplast thylakoid membrane. May help in the organization of the PsaE and PsaF subunits. The polypeptide is Photosystem I reaction center subunit IX (Calycanthus floridus var. glaucus (Eastern sweetshrub)).